A 372-amino-acid chain; its full sequence is Caytaxin (372 aa).

A disordered region spans residues 1 to 58 (MGTTEATLRMENVDVRDEWQDEDLPRPLPEDTGVERLGGAVEDSSSPPSTLNLSGAHR). Positions 11-29 (ENVDVRDEWQDEDLPRPLP) are enriched in basic and acidic residues. A compositionally biased stretch (polar residues) spans 43-53 (DSSSPPSTLNL). The residue at position 54 (Ser54) is a Phosphoserine. The segment at 115–120 (ELEWED) is required for interaction with KLC1. The region spanning 171–328 (IRPYMKVVTH…CVLQYEEQRL (158 aa)) is the CRAL-TRIO domain. The interval 190–372 (AIIVFAACFL…ATEDQETSMS (183 aa)) is mediates interaction with GLS. Residues 329–372 (RAKRESTRPPQPEFLLPRSEEKPETVEEEDRAAEATEDQETSMS) are disordered. Positions 354–372 (VEEEDRAAEATEDQETSMS) are enriched in acidic residues.

As to quaternary structure, interacts with KLC1; may link mitochondria to KLC1 and regulate mitochondria localization into neuron projections. Interacts with GLS; the interaction is direct and may control GLS localization, negatively regulating its activity. Interacts with PIN1 (via WW domain); upon NGF stimulation. The interaction with PIN1 and GLS is competitive. Post-translationally, cleaved by CASP3 and CASP7. The potential C-terminal product released by CASP3 cleavage may inhibit the ERK signaling pathway through MAP2K2. In terms of processing, may be ubiquitinated by STUB1. As to expression, neuronal tissues specific. Strongly expressed in brain. Expressed in virtually all parts of the adult brain, including cortex, cerebellum and olfactory bulbs. Enriched in hippocampus, cerebellar cortex, deep cerebellar nuclei, and pontine nuclei (at protein level).

The protein resides in the cell projection. It is found in the axon. It localises to the dendrite. The protein localises to the presynapse. Its subcellular location is the mitochondrion. The protein resides in the growth cone. It is found in the cytoplasm. Its function is as follows. Functions in the development of neural tissues, particularly the postnatal maturation of the cerebellar cortex. May play a role in neurotransmission through regulation of glutaminase/GLS, an enzyme responsible for the production in neurons of the glutamate neurotransmitter. Alternatively, may regulate the localization of mitochondria within axons and dendrites. This is Caytaxin (Atcay) from Mus musculus (Mouse).